A 184-amino-acid polypeptide reads, in one-letter code: uncharacterized protein (184 aa).

The region spanning 72-135 (RKSQAILLIG…GIALGSAVKV (64 aa)) is the 4Fe-4S domain. [4Fe-4S] cluster-binding residues include C92, C95, C100, and C118.

The cofactor is [4Fe-4S] cluster.

This is an uncharacterized protein from Archaeoglobus fulgidus (strain ATCC 49558 / DSM 4304 / JCM 9628 / NBRC 100126 / VC-16).